Reading from the N-terminus, the 56-residue chain is Aspartyl-phosphate phosphatase YisI (56 aa).

This sequence belongs to the spo0E family.

Its function is as follows. Aspartyl-phosphate phosphatase which specifically dephosphorylates the sporulation transcription factor Spo0A-P and negatively regulates the sporulation initiation pathway in order to control the proper timing of sporulation. This Bacillus subtilis (strain 168) protein is Aspartyl-phosphate phosphatase YisI (yisI).